A 327-amino-acid chain; its full sequence is Alkene monooxygenase system, ferredoxin--NAD(+) reductase component (327 aa).

The 89-residue stretch at 1 to 89 (MRLNDGRSFS…DLEINVRAGD (89 aa)) folds into the 2Fe-2S ferredoxin-type domain. Residues cysteine 32, cysteine 37, cysteine 40, and cysteine 73 each contribute to the [2Fe-2S] cluster site. The FAD-binding FR-type domain maps to 96-194 (PRRHAARVTV…EGPYGRAYLR (99 aa)).

The protein belongs to the bacterial ring-hydroxylating dioxygenase ferredoxin reductase family. As to quaternary structure, monomer. The alkene monooxygenase multicomponent enzyme system is composed of an electron transfer component and a monooxygenase component interacting with the effector protein XamoD. The electron transfer component is composed of a ferredoxin reductase (XamoF) and a ferredoxin (XamoC), and the monooxygenase component is formed by a heterohexamer (dimer of heterotrimers) of two alpha subunits (XamoA), two beta subunits (XamoE) and two gamma subunits (XamoB). FAD serves as cofactor. [2Fe-2S] cluster is required as a cofactor.

Its subcellular location is the cytoplasm. It catalyses the reaction 2 reduced [2Fe-2S]-[ferredoxin] + NAD(+) + H(+) = 2 oxidized [2Fe-2S]-[ferredoxin] + NADH. Functionally, reductase component of the alkene monooxygenase multicomponent enzyme system which catalyzes the O2- and NADH-dependent epoxidation of short chain (C2 to C6) alkenes to their corresponding epoxides. Ferredoxin reductase catalyzes the transfer of electrons from NADH to ferredoxin (XamoC). NADPH is also effective but with a rate approximately 3-fold lower than with NADH. The chain is Alkene monooxygenase system, ferredoxin--NAD(+) reductase component from Xanthobacter autotrophicus (strain ATCC BAA-1158 / Py2).